A 271-amino-acid chain; its full sequence is Acetyl-coenzyme A carboxylase carboxyl transferase subunit beta (271 aa).

A CoA carboxyltransferase N-terminal domain is found at 21 to 271; the sequence is LWIQCPYCKQ…LGDLLALHTA (251 aa). 4 residues coordinate Zn(2+): cysteine 25, cysteine 28, cysteine 43, and cysteine 46. The C4-type zinc-finger motif lies at 25–46; it reads CPYCKQGSYRESLGNAQVCPHC.

It belongs to the AccD/PCCB family. Acetyl-CoA carboxylase is a heterohexamer composed of biotin carboxyl carrier protein (AccB), biotin carboxylase (AccC) and two subunits each of ACCase subunit alpha (AccA) and ACCase subunit beta (AccD). The cofactor is Zn(2+).

Its subcellular location is the cytoplasm. The enzyme catalyses N(6)-carboxybiotinyl-L-lysyl-[protein] + acetyl-CoA = N(6)-biotinyl-L-lysyl-[protein] + malonyl-CoA. The protein operates within lipid metabolism; malonyl-CoA biosynthesis; malonyl-CoA from acetyl-CoA: step 1/1. Its function is as follows. Component of the acetyl coenzyme A carboxylase (ACC) complex. Biotin carboxylase (BC) catalyzes the carboxylation of biotin on its carrier protein (BCCP) and then the CO(2) group is transferred by the transcarboxylase to acetyl-CoA to form malonyl-CoA. The polypeptide is Acetyl-coenzyme A carboxylase carboxyl transferase subunit beta (Lacticaseibacillus paracasei (strain ATCC 334 / BCRC 17002 / CCUG 31169 / CIP 107868 / KCTC 3260 / NRRL B-441) (Lactobacillus paracasei)).